A 123-amino-acid polypeptide reads, in one-letter code: Small ribosomal subunit protein eS8 (123 aa).

Residues 1-37 (MKDQGRSTRKRTGGRLKHASNKKRHQLGREPAETTVG) form a disordered region. Basic residues predominate over residues 7 to 26 (STRKRTGGRLKHASNKKRHQ).

Belongs to the eukaryotic ribosomal protein eS8 family. In terms of assembly, part of the 30S ribosomal subunit.

This chain is Small ribosomal subunit protein eS8, found in Halorubrum lacusprofundi (strain ATCC 49239 / DSM 5036 / JCM 8891 / ACAM 34).